We begin with the raw amino-acid sequence, 1404 residues long: DNA (cytosine-5)-methyltransferase 3 (1404 aa).

Basic residues predominate over residues 1-10 (MKTKAGKQKK). Residues 1-35 (MKTKAGKQKKRSVDSDDDVSRERRPKRATSGTNFK) are disordered. Residues 11–22 (RSVDSDDDVSRE) show a composition bias toward basic and acidic residues. Lys-486 is covalently cross-linked (Glycyl lysine isopeptide (Lys-Gly) (interchain with G-Cter in ubiquitin)). BAH domains follow at residues 614–748 (RKMD…FSLP) and 788–929 (IKYS…KKLP). One can recognise an SAM-dependent MTase C5-type domain in the interval 969–1402 (LATLDIFAGC…RKLKEALHLR (434 aa)). Residue Cys-1085 is part of the active site.

This sequence belongs to the class I-like SAM-binding methyltransferase superfamily. C5-methyltransferase family.

The protein resides in the nucleus. It carries out the reaction a 2'-deoxycytidine in DNA + S-adenosyl-L-methionine = a 5-methyl-2'-deoxycytidine in DNA + S-adenosyl-L-homocysteine + H(+). Maintains chromatin CpG methylation that plays a role in genomic imprinting, regulation of embryogenesis and seed viability. Required for proper patterns of CG DNA methylation in dividing cells. Required during the endosperm development in seeds. In Arabidopsis thaliana (Mouse-ear cress), this protein is DNA (cytosine-5)-methyltransferase 3 (MET3).